Consider the following 387-residue polypeptide: Large ribosomal subunit protein uL3 (387 aa).

The protein belongs to the universal ribosomal protein uL3 family.

Its subcellular location is the cytoplasm. The sequence is that of Large ribosomal subunit protein uL3 (RPL3) from Candida glabrata (strain ATCC 2001 / BCRC 20586 / JCM 3761 / NBRC 0622 / NRRL Y-65 / CBS 138) (Yeast).